A 418-amino-acid chain; its full sequence is Serine proteinase inhibitor 2.4 (418 aa).

Positions 1 to 28 (MAFIAALGIFMAGICPAVLCFPNGTLGR) are cleaved as a signal peptide. N-linked (GlcNAc...) asparagine glycans are attached at residues asparagine 23, asparagine 38, asparagine 104, and asparagine 269.

The protein belongs to the serpin family.

The protein resides in the secreted. The protein is Serine proteinase inhibitor 2.4 of Apodemus sylvaticus (European woodmouse).